Consider the following 281-residue polypeptide: UPF0750 membrane protein YvjA (281 aa).

Helical transmembrane passes span 14–34, 56–76, 77–97, 108–128, and 149–169; these read YVYILIGAAITAVSFNVFLLP, AAYVQWIINIPLFIAGVILLG, GKFGLKTLAGSVFLPLVVFLT, LLAAIFGGVGIGIGIGIVYLG, and SLGKCLAIIDGMIVVTAMIVF.

It belongs to the UPF0750 family.

The protein resides in the cell membrane. The polypeptide is UPF0750 membrane protein YvjA (yvjA) (Bacillus subtilis (strain 168)).